Here is a 125-residue protein sequence, read N- to C-terminus: NADPH-dependent 7-cyano-7-deazaguanine reductase (125 aa).

Catalysis depends on C41, which acts as the Thioimide intermediate. Residue D48 is the Proton donor of the active site. Substrate is bound by residues 63–65 (VEL) and 82–83 (HE).

This sequence belongs to the GTP cyclohydrolase I family. QueF type 1 subfamily.

It localises to the cytoplasm. The catalysed reaction is 7-aminomethyl-7-carbaguanine + 2 NADP(+) = 7-cyano-7-deazaguanine + 2 NADPH + 3 H(+). Its pathway is tRNA modification; tRNA-queuosine biosynthesis. Catalyzes the NADPH-dependent reduction of 7-cyano-7-deazaguanine (preQ0) to 7-aminomethyl-7-deazaguanine (preQ1). This is NADPH-dependent 7-cyano-7-deazaguanine reductase from Sulfurimonas denitrificans (strain ATCC 33889 / DSM 1251) (Thiomicrospira denitrificans (strain ATCC 33889 / DSM 1251)).